Consider the following 95-residue polypeptide: Large ribosomal subunit protein uL24c (95 aa).

It belongs to the universal ribosomal protein uL24 family. As to quaternary structure, part of the 50S ribosomal subunit.

It is found in the plastid. It localises to the chloroplast. One of two assembly initiator proteins, it binds directly to the 5'-end of the 23S rRNA, where it nucleates assembly of the 50S subunit. The chain is Large ribosomal subunit protein uL24c (rpl24) from Porphyra purpurea (Red seaweed).